Here is a 130-residue protein sequence, read N- to C-terminus: Small ribosomal subunit protein uS9 (130 aa).

The protein belongs to the universal ribosomal protein uS9 family.

The sequence is that of Small ribosomal subunit protein uS9 from Shewanella amazonensis (strain ATCC BAA-1098 / SB2B).